A 267-amino-acid chain; its full sequence is MNALLSNPFKERLRKGEVQIGLWLSSTTAYMAEIAATSGYDWLLIDGEHAPNTIQDLYHQLQAVAPYASQPVIRPVEGSKPLIKQVLDIGAQTLLIPMVDTAEQARQVVSATRYPPYGERGVGASVARAARWGRIENYMAQVNDSLCLLVQVESKTALDNLDEILDVEGIDGVFIGPADLSASLGYPDNAGHPEVQRIIETSIRRIRAAGKAAGFLAVAPDMAQQCLAWGANFVAVGVDTMLYSDALDQRLAMFKSGKNGPRIKGSY.

The active-site Proton acceptor is histidine 49. Glutamine 151 is a binding site for substrate. A Mg(2+)-binding site is contributed by glutamate 153. Substrate contacts are provided by alanine 178 and aspartate 179. Position 179 (aspartate 179) interacts with Mg(2+).

Belongs to the HpcH/HpaI aldolase family. KDR aldolase subfamily. Homohexamer. Requires Mg(2+) as cofactor. It depends on Ni(2+) as a cofactor.

It catalyses the reaction 2-dehydro-3-deoxy-L-rhamnonate = (S)-lactaldehyde + pyruvate. The enzyme catalyses D-glyceraldehyde + 3-hydroxypyruvate = (3R,4S,5R)-3,4,5,6-tetrahydroxy-2-oxohexanoate. It carries out the reaction D-glyceraldehyde + 3-hydroxypyruvate = 2-dehydro-D-gluconate. The catalysed reaction is D-glyceraldehyde + 3-hydroxypyruvate = 2-dehydro-D-galactonate. It catalyses the reaction D-glyceraldehyde + pyruvate = 2-dehydro-3-deoxy-L-galactonate. The enzyme catalyses 2-dehydro-3-deoxy-D-gluconate = D-glyceraldehyde + pyruvate. Catalyzes the reversible retro-aldol cleavage of 2-keto-3-deoxy-L-rhamnonate (KDR) to pyruvate and lactaldehyde. 2-keto-3-deoxy-L-mannonate, 2-keto-3-deoxy-L-lyxonate and 4-hydroxy-2-ketoheptane-1,7-dioate (HKHD) are also reasonably good substrates, although 2-keto-3-deoxy-L-rhamnonate is likely to be the physiological substrate. In vitro, can catalyze the aldolisation reaction between hydroxypyruvate (HPA) or pyruvate (PA) and D-glyceraldehyde (D-GA). The condensation of hydroxypyruvate and D-glyceraldehyde produces (3R,4S,5R)-3,4,5,6-tetrahydroxy-2-oxohexanoate as the major product, 2-dehydro-D-gluconate and 2-dehydro-D-galactonate. The condensation of pyruvate and D-glyceraldehyde produces 2-dehydro-3-deoxy-L-galactonate as the major product and 2-dehydro-3-deoxy-D-gluconate. This chain is 2-keto-3-deoxy-L-rhamnonate aldolase (rhmA), found in Escherichia coli (strain K12).